Consider the following 240-residue polypeptide: Vacuolar-sorting protein SNF7 (240 aa).

Thr72 carries the phosphothreonine modification. A phosphoserine mark is found at Ser119 and Ser193. The segment at 193–240 (SENKVSLPSVPSNKIKQSENSVKDGEEEEDEEDEDEKALRELQAEMGL) is disordered. Residues 195 to 212 (NKVSLPSVPSNKIKQSEN) are compositionally biased toward polar residues. The segment covering 217–228 (GEEEEDEEDEDE) has biased composition (acidic residues). A Glycyl lysine isopeptide (Lys-Gly) (interchain with G-Cter in ubiquitin) cross-link involves residue Lys229. The span at 229-240 (KALRELQAEMGL) shows a compositional bias: basic and acidic residues.

This sequence belongs to the SNF7 family. Core component of the ESCRT-III complex (endosomal sorting required for transport complex III). ESCRT-III appears to be sequentially assembled as a flat lattice on the endosome membrane and forms a transient 450 kDa complex that contains DID4, oligomerized SNF7, VPS20 and VPS24. SNF7 polymerizes into spirals at the surface of lipid bilayers. SNF7 polymerization is nucleated by association of SNF7 with VPS20; the process is terminated through association of VPS24, possibly by capping the SNF7 filament. Interacts with VTA1; the interaction requires DID2. Interacts with BRO1. Interacts with DOA4. Interacts with HEH1 and HEH2. Interacts with RIM20 and YGR122W.

It localises to the cytoplasm. The protein localises to the endosome membrane. Its subcellular location is the nucleus envelope. Functionally, acts a component of the ESCRT-III complex required for the sorting and concentration of proteins resulting in the entry of these proteins into the invaginating vesicles of the multivesicular body (MVB). The sequential action of ESCRT-0, -I, and -II together with the ordered assembly of ESCRT-III links membrane invagination to cargo sorting. Membrane scission in the neck of the growing vesicle releases mature, cargo-laden ILVs into the lumen. ESCRT-III is critical for late steps in MVB sorting, such as membrane invagination and final cargo sorting and recruitment of late-acting components of the sorting machinery. SNF7 is the most abundant ESCRT-III subunit which forms membrane-sculpting filaments with 30 Angstrom periodicity and a exposed cationic membrane-binding surface. Its activation requires a prominent conformational rearrangement to expose protein-membrane and protein-protein interfaces. SNF7 filaments then form spirals that could function as spiral springs. The elastic expansion of compressed SNF7 spirals generates an area difference between the two sides of the membrane and thus curvature which could be the origin of membrane deformation leading eventually to fission. SNF7 recruits BRO1, which in turn recruits DOA4, which deubiquitinates cargos before their enclosure within MVB vesicles. ESCRT-III is also recruited to the nuclear envelope (NE) by integral INM proteins to surveil and clear defective nuclear pore complex (NPC) assembly intermediates to ensure the fidelity of NPC assembly. This is Vacuolar-sorting protein SNF7 from Saccharomyces cerevisiae (strain ATCC 204508 / S288c) (Baker's yeast).